Consider the following 337-residue polypeptide: Phosphate acyltransferase (337 aa).

Belongs to the PlsX family. As to quaternary structure, homodimer. Probably interacts with PlsY.

Its subcellular location is the cytoplasm. It catalyses the reaction a fatty acyl-[ACP] + phosphate = an acyl phosphate + holo-[ACP]. It functions in the pathway lipid metabolism; phospholipid metabolism. In terms of biological role, catalyzes the reversible formation of acyl-phosphate (acyl-PO(4)) from acyl-[acyl-carrier-protein] (acyl-ACP). This enzyme utilizes acyl-ACP as fatty acyl donor, but not acyl-CoA. The protein is Phosphate acyltransferase of Listeria innocua serovar 6a (strain ATCC BAA-680 / CLIP 11262).